A 575-amino-acid chain; its full sequence is Interleukin-1 receptor-like 2 (575 aa).

Positions Met1–Ala19 are cleaved as a signal peptide. 3 consecutive Ig-like C2-type domains span residues Asp20 to Thr111, Pro126 to Gly211, and Tyr222 to Ala318. Over Asp20–Arg335 the chain is Extracellular. N-linked (GlcNAc...) asparagine glycosylation is found at Asn41, Asn59, Asn109, Asn127, Asn184, Asn234, Asn250, Asn266, and Asn299. A disulfide bridge connects residues Cys42 and Cys95. Cysteines 146 and 195 form a disulfide. Cys249 and Cys316 are disulfide-bonded. The helical transmembrane segment at Ala336–Tyr356 threads the bilayer. At Asn357–Gly575 the chain is on the cytoplasmic side. In terms of domain architecture, TIR spans Lys381 to Met536. The active site involves Glu467.

It belongs to the interleukin-1 receptor family. In terms of assembly, interacts with IL1RAP; the association is enhanced by IL36B indicative for an functional signaling complex and inhibited by IL36RN. Expressed in synovial fibroblasts and articular chondrocytes. Expressed in keratinocytes and monocyte-derived dendritic cells. Expressed in monocytes and myeloid dendritic cells; at protein level.

Its subcellular location is the membrane. The catalysed reaction is NAD(+) + H2O = ADP-D-ribose + nicotinamide + H(+). Functionally, receptor for interleukin-36 (IL36A, IL36B and IL36G). After binding to interleukin-36 associates with the coreceptor IL1RAP to form the interleukin-36 receptor complex which mediates interleukin-36-dependent activation of NF-kappa-B, MAPK and other pathways. The IL-36 signaling system is thought to be present in epithelial barriers and to take part in local inflammatory response; it is similar to the IL-1 system. Seems to be involved in skin inflammatory response by induction of the IL-23/IL-17/IL-22 pathway. The polypeptide is Interleukin-1 receptor-like 2 (IL1RL2) (Homo sapiens (Human)).